The sequence spans 1081 residues: DNA-directed RNA polymerase subunit beta (1081 aa).

This sequence belongs to the RNA polymerase beta chain family. As to quaternary structure, in plastids the minimal PEP RNA polymerase catalytic core is composed of four subunits: alpha, beta, beta', and beta''. When a (nuclear-encoded) sigma factor is associated with the core the holoenzyme is formed, which can initiate transcription.

It is found in the plastid. The protein resides in the chloroplast. The catalysed reaction is RNA(n) + a ribonucleoside 5'-triphosphate = RNA(n+1) + diphosphate. Its function is as follows. DNA-dependent RNA polymerase catalyzes the transcription of DNA into RNA using the four ribonucleoside triphosphates as substrates. The chain is DNA-directed RNA polymerase subunit beta from Cyanidium caldarium (Red alga).